A 485-amino-acid polypeptide reads, in one-letter code: Iroquois-class homeodomain protein IRX-4 (485 aa).

Positions 142 to 203 (GTRRKNATRE…NARRRLKKEN (62 aa)) form a DNA-binding region, homeobox; TALE-type. A disordered region spans residues 206–313 (TWPPRNKCSD…EEEEAAERAR (108 aa)). Residues 221–232 (EEEEEEEEECSQ) show a composition bias toward acidic residues. Positions 234 to 253 (DAMKSEKAEEPTGKEEKELE) are enriched in basic and acidic residues. The span at 254–269 (LSDLEDLDAAESESSE) shows a compositional bias: acidic residues. A compositionally biased stretch (pro residues) spans 282–294 (HPLPGGGPPPRAA).

Belongs to the TALE/IRO homeobox family. Ventricles of the heart, developing feather buds, retina, hindbrain.

It is found in the nucleus. In terms of biological role, regulates the chamber-specific expression of myosin isoforms by activating the expression of the ventricle myosin heavy chain-1 (Vmhc1) and suppressing the expression of the atrial myosin heavy chain-1 (Amhc1) in the ventricles. May play a critical role in establishing chamber-specific gene expression in the developing heart. This is Iroquois-class homeodomain protein IRX-4 (IRX4) from Gallus gallus (Chicken).